We begin with the raw amino-acid sequence, 197 residues long: GTP cyclohydrolase-2 (197 aa).

A GTP-binding site is contributed by 50–54; the sequence is RIHSE. 3 residues coordinate Zn(2+): C55, C66, and C68. GTP is bound by residues Q71, 93-95, and T115; that span reads EGR. Residue D127 is the Proton acceptor of the active site. R129 acts as the Nucleophile in catalysis. The GTP site is built by T150 and K155.

Belongs to the GTP cyclohydrolase II family. Zn(2+) is required as a cofactor.

It carries out the reaction GTP + 4 H2O = 2,5-diamino-6-hydroxy-4-(5-phosphoribosylamino)-pyrimidine + formate + 2 phosphate + 3 H(+). Its pathway is cofactor biosynthesis; riboflavin biosynthesis; 5-amino-6-(D-ribitylamino)uracil from GTP: step 1/4. Functionally, catalyzes the conversion of GTP to 2,5-diamino-6-ribosylamino-4(3H)-pyrimidinone 5'-phosphate (DARP), formate and pyrophosphate. The protein is GTP cyclohydrolase-2 of Neisseria meningitidis serogroup A / serotype 4A (strain DSM 15465 / Z2491).